Here is a 442-residue protein sequence, read N- to C-terminus: Trigger factor (442 aa).

Residues 163–248 (NDLVTINYCI…ILNVEEKQEN (86 aa)) form the PPIase FKBP-type domain.

The protein belongs to the FKBP-type PPIase family. Tig subfamily.

The protein resides in the cytoplasm. It catalyses the reaction [protein]-peptidylproline (omega=180) = [protein]-peptidylproline (omega=0). In terms of biological role, involved in protein export. Acts as a chaperone by maintaining the newly synthesized protein in an open conformation. Functions as a peptidyl-prolyl cis-trans isomerase. This is Trigger factor from Buchnera aphidicola subsp. Schizaphis graminum (strain Sg).